A 333-amino-acid chain; its full sequence is Putative transporter MamV (333 aa).

The next 5 helical transmembrane spans lie at alanine 19–leucine 39, phenylalanine 86–tyrosine 106, leucine 111–alanine 131, valine 170–isoleucine 190, and leucine 191–leucine 211.

This sequence belongs to the cation diffusion facilitator (CDF) transporter (TC 2.A.4) family.

The protein resides in the cell inner membrane. Functionally, expression of just the minimal mamAB gene cluster (amb0961 to amb0978), including this gene, is sufficient to form a minimal magnetosome chain with small magnetite particles. In Paramagnetospirillum magneticum (strain ATCC 700264 / AMB-1) (Magnetospirillum magneticum), this protein is Putative transporter MamV.